The following is a 485-amino-acid chain: MKYRKRGWPSCWWPRAAVLPMRRQGVGGAEKIVRIADISGFTGALGKTAEAIETTPAGVEKIVLVGVGEPGKLGNDDWLKIGGAAFSQIGNAERVTLTLALPETTIAGDEAADVALGMVLRSYKFDRYKTRKSEENGEPKHAAKITVCVADTHSARKAFEVAEAVADGVIQARNLVNEPANILGPVEFAEEAEKLEKLGVKVEVLGEKELKKLGMGALLGVAQGSVRPPRLVVMEWHGAKGKEKPIAFVGKGVVFDTGGISIKPAANMEDMKGDMGGAAAVTGLMRALAGRKAKVNAIGVIGLVENMPDGNAQRPGDIVTSMSGQTIEVINTDAEGRLVLADALHYTNDRFKPRFIINLATLTGAVMVALGQYHAGLFSNDDELADQLYDAGQSTGEKLWRLPLGTEYDKMIDSKFADMKNSAGRYGGSITAAQFLKRFVGETPWAHLDVAGTAMGSPANEYNQSWASGFGVRLLDRLVRDQFES.

Mn(2+)-binding residues include K251 and D256. Residue K263 is part of the active site. Residues D274, D333, and E335 each coordinate Mn(2+). R337 is an active-site residue.

This sequence belongs to the peptidase M17 family. The cofactor is Mn(2+).

The protein resides in the cytoplasm. It carries out the reaction Release of an N-terminal amino acid, Xaa-|-Yaa-, in which Xaa is preferably Leu, but may be other amino acids including Pro although not Arg or Lys, and Yaa may be Pro. Amino acid amides and methyl esters are also readily hydrolyzed, but rates on arylamides are exceedingly low.. It catalyses the reaction Release of an N-terminal amino acid, preferentially leucine, but not glutamic or aspartic acids.. Functionally, presumably involved in the processing and regular turnover of intracellular proteins. Catalyzes the removal of unsubstituted N-terminal amino acids from various peptides. The chain is Probable cytosol aminopeptidase from Brucella melitensis biotype 1 (strain ATCC 23456 / CCUG 17765 / NCTC 10094 / 16M).